The chain runs to 119 residues: Ribosome-binding factor A (119 aa).

The protein belongs to the RbfA family. As to quaternary structure, monomer. Binds 30S ribosomal subunits, but not 50S ribosomal subunits or 70S ribosomes.

The protein resides in the cytoplasm. Its function is as follows. One of several proteins that assist in the late maturation steps of the functional core of the 30S ribosomal subunit. Associates with free 30S ribosomal subunits (but not with 30S subunits that are part of 70S ribosomes or polysomes). Required for efficient processing of 16S rRNA. May interact with the 5'-terminal helix region of 16S rRNA. The polypeptide is Ribosome-binding factor A (Limosilactobacillus reuteri (strain DSM 20016) (Lactobacillus reuteri)).